The primary structure comprises 425 residues: RNA polymerase sigma factor SigA (425 aa).

Residues 193 to 263 (MVQSNLRLVV…TRAIADQSRT (71 aa)) are sigma-70 factor domain-2. Residues 217–220 (DLIQ) carry the Interaction with polymerase core subunit RpoC motif. The tract at residues 272-347 (ETISRIKKTT…EADGETPEDE (76 aa)) is sigma-70 factor domain-3. A sigma-70 factor domain-4 region spans residues 360 to 413 (VLDTLSPRERDVLRLRYGLDDGRMKTLEEIGQIFNVTRERIRQIEAKALRKLRH). Positions 386–405 (LEEIGQIFNVTRERIRQIEA) form a DNA-binding region, H-T-H motif.

The protein belongs to the sigma-70 factor family. RpoD/SigA subfamily. In terms of assembly, interacts transiently with the RNA polymerase catalytic core.

It localises to the cytoplasm. Its function is as follows. Sigma factors are initiation factors that promote the attachment of RNA polymerase to specific initiation sites and are then released. This sigma factor is the primary sigma factor during exponential growth. The polypeptide is RNA polymerase sigma factor SigA (Synechocystis sp. (strain ATCC 27184 / PCC 6803 / Kazusa)).